The following is a 148-amino-acid chain: NADH-quinone oxidoreductase subunit C (148 aa).

This sequence belongs to the complex I 30 kDa subunit family. NDH-1 is composed of 14 different subunits. Subunits NuoB, C, D, E, F, and G constitute the peripheral sector of the complex.

The protein localises to the cell membrane. The enzyme catalyses a quinone + NADH + 5 H(+)(in) = a quinol + NAD(+) + 4 H(+)(out). Its function is as follows. NDH-1 shuttles electrons from NADH, via FMN and iron-sulfur (Fe-S) centers, to quinones in the respiratory chain. The immediate electron acceptor for the enzyme in this species is believed to be a menaquinone. Couples the redox reaction to proton translocation (for every two electrons transferred, four hydrogen ions are translocated across the cytoplasmic membrane), and thus conserves the redox energy in a proton gradient. In Moorella thermoacetica (strain ATCC 39073 / JCM 9320), this protein is NADH-quinone oxidoreductase subunit C.